Reading from the N-terminus, the 297-residue chain is Acetyl-coenzyme A carboxylase carboxyl transferase subunit beta (297 aa).

The interval 1 to 23 is disordered; sequence MSWIERILGRTSSSSSSSKSKVP. Positions 26-295 constitute a CoA carboxyltransferase N-terminal domain; it reads VWTKCTSCEQ…PFKTAELIVE (270 aa). Residues C30, C33, C49, and C52 each coordinate Zn(2+). A C4-type zinc finger spans residues 30–52; the sequence is CTSCEQVLYSEELKRNMHVCPKC.

This sequence belongs to the AccD/PCCB family. In terms of assembly, acetyl-CoA carboxylase is a heterohexamer composed of biotin carboxyl carrier protein (AccB), biotin carboxylase (AccC) and two subunits each of ACCase subunit alpha (AccA) and ACCase subunit beta (AccD). Requires Zn(2+) as cofactor.

The protein resides in the cytoplasm. It catalyses the reaction N(6)-carboxybiotinyl-L-lysyl-[protein] + acetyl-CoA = N(6)-biotinyl-L-lysyl-[protein] + malonyl-CoA. Its pathway is lipid metabolism; malonyl-CoA biosynthesis; malonyl-CoA from acetyl-CoA: step 1/1. In terms of biological role, component of the acetyl coenzyme A carboxylase (ACC) complex. Biotin carboxylase (BC) catalyzes the carboxylation of biotin on its carrier protein (BCCP) and then the CO(2) group is transferred by the transcarboxylase to acetyl-CoA to form malonyl-CoA. This chain is Acetyl-coenzyme A carboxylase carboxyl transferase subunit beta, found in Actinobacillus pleuropneumoniae serotype 7 (strain AP76).